The chain runs to 40 residues: Photosystem II reaction center protein Y (40 aa).

The helical transmembrane segment at 5–23 (LVLVASPILLALGWAGFNI) threads the bilayer.

It belongs to the PsbY family. As to quaternary structure, PSII is composed of 1 copy each of membrane proteins PsbA, PsbB, PsbC, PsbD, PsbE, PsbF, PsbH, PsbI, PsbJ, PsbK, PsbL, PsbM, PsbT, PsbX, PsbY, PsbZ, Psb30/Ycf12, peripheral proteins PsbO, CyanoQ (PsbQ), PsbU, PsbV and a large number of cofactors. It forms dimeric complexes.

It is found in the cellular thylakoid membrane. Its function is as follows. Loosely associated component of the core of photosystem II (PSII), it is not always seen in crystals. PSII is a light-driven water plastoquinone oxidoreductase, using light energy to abstract electrons from H(2)O, generating a proton gradient subsequently used for ATP formation. The protein is Photosystem II reaction center protein Y of Synechococcus sp. (strain WH7803).